Here is a 100-residue protein sequence, read N- to C-terminus: Large ribosomal subunit protein uL23 (100 aa).

It belongs to the universal ribosomal protein uL23 family. In terms of assembly, part of the 50S ribosomal subunit. Contacts protein L29, and trigger factor when it is bound to the ribosome.

Its function is as follows. One of the early assembly proteins it binds 23S rRNA. One of the proteins that surrounds the polypeptide exit tunnel on the outside of the ribosome. Forms the main docking site for trigger factor binding to the ribosome. This Aliivibrio fischeri (strain MJ11) (Vibrio fischeri) protein is Large ribosomal subunit protein uL23.